The following is a 153-amino-acid chain: NADH dehydrogenase [ubiquinone] 1 beta subcomplex subunit 11, mitochondrial (153 aa).

The transit peptide at 1-29 (MAAGLFGLSARRLLAAAATRGLPAARVRW) directs the protein to the mitochondrion. Residues 40–76 (PSAVAGKRPPEPTTPWQEDPEPEDENLYEKNPDSHGY) are disordered. Over residues 66–76 (LYEKNPDSHGY) the composition is skewed to basic and acidic residues. A helical membrane pass occupies residues 89–109 (LVFFFGVSIILVLGSTFVAYL).

It belongs to the complex I NDUFB11 subunit family. In terms of assembly, complex I is composed of 45 different subunits. Interacts with BCAP31. As to expression, ubiquitous.

It localises to the mitochondrion inner membrane. Its function is as follows. Accessory subunit of the mitochondrial membrane respiratory chain NADH dehydrogenase (Complex I), that is believed not to be involved in catalysis. Complex I functions in the transfer of electrons from NADH to the respiratory chain. The immediate electron acceptor for the enzyme is believed to be ubiquinone. This is NADH dehydrogenase [ubiquinone] 1 beta subcomplex subunit 11, mitochondrial (NDUFB11) from Homo sapiens (Human).